The chain runs to 502 residues: UPF0371 protein CLM_0396 (502 aa).

The protein belongs to the UPF0371 family.

This chain is UPF0371 protein CLM_0396, found in Clostridium botulinum (strain Kyoto / Type A2).